Consider the following 255-residue polypeptide: CDP-diacylglycerol pyrophosphatase (255 aa).

Residues Leu-5–Phe-27 traverse the membrane as a helical segment.

It belongs to the Cdh family.

It localises to the cell inner membrane. It catalyses the reaction a CDP-1,2-diacyl-sn-glycerol + H2O = a 1,2-diacyl-sn-glycero-3-phosphate + CMP + 2 H(+). Its pathway is phospholipid metabolism; CDP-diacylglycerol degradation; phosphatidate from CDP-diacylglycerol: step 1/1. The polypeptide is CDP-diacylglycerol pyrophosphatase (Cronobacter sakazakii (strain ATCC BAA-894) (Enterobacter sakazakii)).